A 702-amino-acid chain; its full sequence is Polyribonucleotide nucleotidyltransferase (702 aa).

Mg(2+) is bound by residues aspartate 485 and aspartate 491. One can recognise a KH domain in the interval 552 to 612 (PRTEIICIDP…EGVKKAISII (61 aa)). One can recognise an S1 motif domain in the interval 622–690 (GEIYLGKVTK…NQGRINLSRK (69 aa)).

This sequence belongs to the polyribonucleotide nucleotidyltransferase family. Mg(2+) is required as a cofactor.

It is found in the cytoplasm. It carries out the reaction RNA(n+1) + phosphate = RNA(n) + a ribonucleoside 5'-diphosphate. Its function is as follows. Involved in mRNA degradation. Catalyzes the phosphorolysis of single-stranded polyribonucleotides processively in the 3'- to 5'-direction. The chain is Polyribonucleotide nucleotidyltransferase from Clostridium botulinum (strain 657 / Type Ba4).